Consider the following 226-residue polypeptide: Late protein I226R (226 aa).

The first 16 residues, 1-16 (MKMETFLVCLFHNADG), serve as a signal peptide directing secretion. N-linked (GlcNAc...) asparagine; by host glycosylation is found at Asn142 and Asn164.

This sequence belongs to the asfivirus I226R family.

Its function is as follows. Plays a role in the inhibition of host NF-kappa-B and IRF3 signaling pathways. Mechanistically, promotes the degradation of host IKBKG through enhancing its ubiquitination leading to inhibition of both pathways. The chain is Late protein I226R from African swine fever virus (isolate Warthog/Namibia/Wart80/1980) (ASFV).